Consider the following 179-residue polypeptide: Peptide deformylase 2 (179 aa).

2 residues coordinate Fe cation: Cys104 and His146. Glu147 is a catalytic residue. Residue His150 coordinates Fe cation.

The protein belongs to the polypeptide deformylase family. The cofactor is Fe(2+).

The enzyme catalyses N-terminal N-formyl-L-methionyl-[peptide] + H2O = N-terminal L-methionyl-[peptide] + formate. Its function is as follows. Removes the formyl group from the N-terminal Met of newly synthesized proteins. Requires at least a dipeptide for an efficient rate of reaction. N-terminal L-methionine is a prerequisite for activity but the enzyme has broad specificity at other positions. The polypeptide is Peptide deformylase 2 (Streptomyces coelicolor (strain ATCC BAA-471 / A3(2) / M145)).